The following is a 512-amino-acid chain: Protein disulfide-isomerase (512 aa).

An N-terminal signal peptide occupies residues 1–24; the sequence is MAKNVAIFGLLFSLLLLVPSQIFA. The region spanning 25–144 is the Thioredoxin 1 domain; it reads EESSTDAKEF…IVEYLKKQSG (120 aa). Active-site nucleophile residues include Cys62 and Cys65. Cys62 and Cys65 are oxidised to a cystine. N-linked (GlcNAc...) asparagine glycosylation is present at Asn278. Residues 357–485 form the Thioredoxin 2 domain; sequence YKDGKVEPFV…IIEFIEKNKD (129 aa). Residues Cys407 and Cys410 each act as nucleophile in the active site. Residues Cys407 and Cys410 are joined by a disulfide bond. The span at 487 to 496 shows a compositional bias: basic and acidic residues; sequence TGAAHQEVEQ. The segment at 487–512 is disordered; the sequence is TGAAHQEVEQPKAAAQPEAEQPKDEL. The Prevents secretion from ER motif lies at 509-512; the sequence is KDEL.

It belongs to the protein disulfide isomerase family.

The protein localises to the endoplasmic reticulum lumen. The catalysed reaction is Catalyzes the rearrangement of -S-S- bonds in proteins.. Participates in the folding of proteins containing disulfide bonds, may be involved in glycosylation, prolyl hydroxylation and triglyceride transfer. This chain is Protein disulfide-isomerase (PDI), found in Medicago sativa (Alfalfa).